The primary structure comprises 231 residues: NADH-ubiquinone oxidoreductase chain 4 (231 aa).

Helical transmembrane passes span 1–21 (PIAG…YGII), 34–54 (LFLP…LTCL), 63–85 (IAYS…TPWG), 89–111 (AMAL…NMTY), 124–146 (GLHN…NIAI), and 169–189 (TIII…HMFL).

Belongs to the complex I subunit 4 family.

The protein localises to the mitochondrion membrane. It catalyses the reaction a ubiquinone + NADH + 5 H(+)(in) = a ubiquinol + NAD(+) + 4 H(+)(out). Core subunit of the mitochondrial membrane respiratory chain NADH dehydrogenase (Complex I) that is believed to belong to the minimal assembly required for catalysis. Complex I functions in the transfer of electrons from NADH to the respiratory chain. The immediate electron acceptor for the enzyme is believed to be ubiquinone. In Crotalus lepidus (Banded rock rattlesnake), this protein is NADH-ubiquinone oxidoreductase chain 4 (MT-ND4).